Here is a 383-residue protein sequence, read N- to C-terminus: MKSIVYEKKLPKLTSLEIAKNSKKKVICGMSGGVDSSVSAFILQQQGYQVEGLFMKNWEEDDDTDYCTAANDLADAQAVCDKLGIKLHKINFAAEYWDNVFEHFLAEYKAGRTPNPDILCNKEIKFKAFLEYAVEDLGADYIATGHYVRRSDVNGQTKLLRGLDSNKDQSYFLYTLSKDQVAQSLFPVGEIEKPIVRAIAEDLGLITAKKKDSTGICFIGERKFKEFLARFLPAQPGEIRMVDGKVIGKHDGLMYYTLGQRKGLGIGGVKGLSEDPFYVVEKDLINNVLVVAQGNDNSALLSQGLIATQLYWVDRLPIRQNLRCTVKTRYRQQDIACEVIPLNDDCVEVRFDEPQIAVTPGQSAVFYQGEECLGGGVIERQIK.

ATP is bound by residues 29–36 (GMSGGVDS) and Met-55. The tract at residues 115–117 (NPD) is interaction with target base in tRNA. Cys-120 functions as the Nucleophile in the catalytic mechanism. Residues Cys-120 and Cys-217 are joined by a disulfide bond. ATP is bound at residue Gly-145. Residues 167 to 169 (KDQ) form an interaction with tRNA region. Cys-217 acts as the Cysteine persulfide intermediate in catalysis. The interaction with tRNA stretch occupies residues 329–330 (RY).

The protein belongs to the MnmA/TRMU family.

It localises to the cytoplasm. It carries out the reaction S-sulfanyl-L-cysteinyl-[protein] + uridine(34) in tRNA + AH2 + ATP = 2-thiouridine(34) in tRNA + L-cysteinyl-[protein] + A + AMP + diphosphate + H(+). Functionally, catalyzes the 2-thiolation of uridine at the wobble position (U34) of tRNA, leading to the formation of s(2)U34. This chain is tRNA-specific 2-thiouridylase MnmA, found in Histophilus somni (strain 129Pt) (Haemophilus somnus).